We begin with the raw amino-acid sequence, 504 residues long: ATP-dependent RNA helicase DBP3 (504 aa).

Over residues 1-14 (MSKDELKDKKRKVE) the composition is skewed to basic and acidic residues. The tract at residues 1 to 65 (MSKDELKDKK…KSETESFAAS (65 aa)) is disordered. A compositionally biased stretch (basic residues) spans 20–53 (SKKKLKKDKKDKKDKKDKKDKKDKKEKKEKKEKK). Residues 94-120 (LDFSQVSFIDQIQKEISKFPKPTPIQA) carry the Q motif motif. Residues 123 to 296 (WPYLLAGKDV…SSFMSEPVKV (174 aa)) form the Helicase ATP-binding domain. Residue 136-143 (AETGSGKT) coordinates ATP. Positions 243–246 (DEAD) match the DEAD box motif. The region spanning 325-474 (KLLELLKKYH…PVPEELKKFG (150 aa)) is the Helicase C-terminal domain.

It belongs to the DEAD box helicase family. DDX5/DBP2 subfamily.

It localises to the nucleus. The protein resides in the nucleolus. The catalysed reaction is ATP + H2O = ADP + phosphate + H(+). In terms of biological role, ATP-dependent RNA helicase required for 60S ribosomal subunit synthesis. Involved in efficient pre-rRNA processing, predominantly at site A3, which is necessary for the normal formation of 25S and 5.8S rRNAs. The polypeptide is ATP-dependent RNA helicase DBP3 (DBP3) (Kluyveromyces lactis (strain ATCC 8585 / CBS 2359 / DSM 70799 / NBRC 1267 / NRRL Y-1140 / WM37) (Yeast)).